The following is a 190-amino-acid chain: dCTP deaminase (190 aa).

Residue 113–118 participates in dCTP binding; it reads KSTYAR. Glutamate 139 (proton donor/acceptor) is an active-site residue. DCTP-binding residues include glutamine 158, tyrosine 172, lysine 181, and glutamine 182.

The protein belongs to the dCTP deaminase family. Homotrimer.

It catalyses the reaction dCTP + H2O + H(+) = dUTP + NH4(+). The protein operates within pyrimidine metabolism; dUMP biosynthesis; dUMP from dCTP (dUTP route): step 1/2. Functionally, catalyzes the deamination of dCTP to dUTP. This Chlamydia caviae (strain ATCC VR-813 / DSM 19441 / 03DC25 / GPIC) (Chlamydophila caviae) protein is dCTP deaminase.